We begin with the raw amino-acid sequence, 456 residues long: MISTNNSSTPETIIALSTPSGAGALAVVKLSGSRALEIALKLSRRDHLQPRHATLANLWNREDEMMDEAILIYFKAPHSYTAEEVVEIQCHGGTLIARKIIQEALALGARVARAGEFTYRAFLNGRIDLSQAEAIGKLIEAKSDESYKVLLKQLKGELGRYVEGVRGSLVEILAYAEVSIDYAEEDLPSDLEARMVEKIERIAEDLERIYQGSKRRSSLVEGYKLAIIGRPNVGKSSLLNALLLWERAIVSDIPGTTRDTIEESLHLGNHWVRIVDTAGIREAQDAIEKIGIERTLLALKESDMVLALFDSSQSLSPEDEQIKELLRAHQENRRILVLFNKSDLSRELQDSELESYPHRYISAKEGGVEELLSLLASWLDEQGGGEELMLTSERQLLCVKSALGELKEARDRLIEGELELFAYHIQGALKELSLITRPYETSELLDVMFGQFCLGK.

Positions 29, 87, and 126 each coordinate (6S)-5-formyl-5,6,7,8-tetrahydrofolate. One can recognise a TrmE-type G domain in the interval 222–380; it reads GYKLAIIGRP…LLSLLASWLD (159 aa). Residue asparagine 232 coordinates K(+). GTP is bound by residues 232–237, 251–257, and 276–279; these read NVGKSS, SDIPGTT, and DTAG. Serine 236 provides a ligand contact to Mg(2+). Serine 251, isoleucine 253, and threonine 256 together coordinate K(+). Threonine 257 is a binding site for Mg(2+). Residue lysine 456 participates in (6S)-5-formyl-5,6,7,8-tetrahydrofolate binding.

It belongs to the TRAFAC class TrmE-Era-EngA-EngB-Septin-like GTPase superfamily. TrmE GTPase family. In terms of assembly, homodimer. Heterotetramer of two MnmE and two MnmG subunits. K(+) serves as cofactor.

Its subcellular location is the cytoplasm. In terms of biological role, exhibits a very high intrinsic GTPase hydrolysis rate. Involved in the addition of a carboxymethylaminomethyl (cmnm) group at the wobble position (U34) of certain tRNAs, forming tRNA-cmnm(5)s(2)U34. This chain is tRNA modification GTPase MnmE, found in Wolinella succinogenes (strain ATCC 29543 / DSM 1740 / CCUG 13145 / JCM 31913 / LMG 7466 / NCTC 11488 / FDC 602W) (Vibrio succinogenes).